Reading from the N-terminus, the 70-residue chain is uncharacterized protein (70 aa).

It belongs to the opacity porin family.

This is an uncharacterized protein from Haemophilus influenzae (strain ATCC 51907 / DSM 11121 / KW20 / Rd).